Here is a 561-residue protein sequence, read N- to C-terminus: MSTQWWKESVVYQIYPRSFQDYNGDGIGDIPGIISRLDYLKTLGVDVIWLSPVYDSPNDDNGYDIRDYKAIMDEFGTMADWETLLAEIHTRGMKLIMDLVVNHSSDEHAWFVESRKSKDNPYRDFYIWRPGKDGKEPNNWASNFSGSAWTYDETTGEYYLHLFSKKQPDLNWENPKLREKIYEMMTWWLDKGIDGFRMDVINFISKVDGLPDAEPQPGQPYVSGSNYFMNGPNIHTYLQEMHENVLQHYDLMTVGEMPGVTLELAQLYTGEERNELNMVFQFEHVGLDQGPNGKWDLKPLELKDLKASLSRWQKGLQDIGWNSLYWNNHDQPRIVSRFGDDQSYRVESAKMLATLLHCMKGTPFIYQGEEIGMTNVRFDSIEQYQDIETLNMYKEKRAQGVPHETLMASIHAKGRDNARTPMQWDETKHGGFTDGTPWLEVNPNYKEINVKQALKDPNSIFYHYQKLIQLRKEHAILVHGSYDLILEDDPEIFAYKRTYNGQTLLVVCNFYGRITDFECPAEVVLSEPTLLLSNYDEEENGSYTSFRLRPYEARVYLGKNE.

Asp199 serves as the catalytic Nucleophile. The active-site Proton donor is the Glu256.

This sequence belongs to the glycosyl hydrolase 13 family.

It localises to the cytoplasm. The catalysed reaction is Hydrolysis of (1-&gt;6)-alpha-D-glucosidic linkages in some oligosaccharides produced from starch and glycogen by alpha-amylase, and in isomaltose.. The protein is Oligo-1,6-glucosidase (malL) of Halalkalibacterium halodurans (strain ATCC BAA-125 / DSM 18197 / FERM 7344 / JCM 9153 / C-125) (Bacillus halodurans).